The chain runs to 187 residues: Large ribosomal subunit protein bL17 (187 aa).

The protein belongs to the bacterial ribosomal protein bL17 family. Part of the 50S ribosomal subunit. Contacts protein L32.

This is Large ribosomal subunit protein bL17 from Rhodococcus opacus (strain B4).